Here is a 208-residue protein sequence, read N- to C-terminus: Small ribosomal subunit protein uS4 (208 aa).

An S4 RNA-binding domain is found at 98-161 (QRLDNLVYRM…KNNPQILRAV (64 aa)).

It belongs to the universal ribosomal protein uS4 family. Part of the 30S ribosomal subunit. Contacts protein S5. The interaction surface between S4 and S5 is involved in control of translational fidelity.

In terms of biological role, one of the primary rRNA binding proteins, it binds directly to 16S rRNA where it nucleates assembly of the body of the 30S subunit. Its function is as follows. With S5 and S12 plays an important role in translational accuracy. In Campylobacter hominis (strain ATCC BAA-381 / DSM 21671 / CCUG 45161 / LMG 19568 / NCTC 13146 / CH001A), this protein is Small ribosomal subunit protein uS4.